The primary structure comprises 193 residues: CASP-like protein 1D1 (193 aa).

The tract at residues 1–24 (MGYETKSTLDTERSTAPGTGTTTK) is disordered. Topologically, residues 1–30 (MGYETKSTLDTERSTAPGTGTTTKSCSMTQ) are cytoplasmic. The span at 14–24 (STAPGTGTTTK) shows a compositional bias: polar residues. A helical transmembrane segment spans residues 31–51 (VVLRFVLFAATLTSIVVMVTS). The Extracellular portion of the chain corresponds to 52–76 (KQTKNIFLPGTPIRIPAAEFTNSPA). A helical transmembrane segment spans residues 77–97 (LIYFVVALSVACFYSIVSTFV). Residues 98-108 (TVSAFKKHSCS) are Cytoplasmic-facing. The helical transmembrane segment at 109–129 (AVLLLNLAIMDAVMVGIVASA) threads the bilayer. At 130–162 (TGAGGGVAYLGLKGNKEVRWGKICHIYDKFCRH) the chain is on the extracellular side. Residues 163–183 (VGGAIAVSLFASVVLLLLSII) form a helical membrane-spanning segment. The Cytoplasmic portion of the chain corresponds to 184–193 (SVLSLYKKIR).

The protein belongs to the Casparian strip membrane proteins (CASP) family. In terms of assembly, homodimer and heterodimers.

It is found in the cell membrane. The polypeptide is CASP-like protein 1D1 (Arabidopsis thaliana (Mouse-ear cress)).